Reading from the N-terminus, the 963-residue chain is Adhesion G protein-coupled receptor D2 (963 aa).

The Extracellular portion of the chain corresponds to 1–662; sequence MDAPWGAGER…EEESLLRTLS (662 aa). The interval 18-38 is disordered; it reads DRSGVSLGPPPTPQVNQGTLG. Residues 116 to 325 enclose the Pentraxin (PTX) domain; sequence TTAVLVFDER…LPTVWVRLLC (210 aa). A disulfide bond links cysteine 146 and cysteine 212. An N-linked (GlcNAc...) asparagine glycan is attached at asparagine 271. The GAIN-B domain maps to 489-649; that stretch reads MALVASVQRL…AILLQIYEVQ (161 aa). A GPS region spans residues 599–649; that stretch reads PLFPPHPPSPYTGGAWATTGCSVAALYLDSTACFCNHSTSFAILLQIYEVQ. Cysteine 619 and cysteine 633 form a disulfide bridge. The N-linked (GlcNAc...) asparagine glycan is linked to asparagine 634. The chain crosses the membrane as a helical span at residues 663-683; sequence FVGCGVSFCALTTTFLLFLVA. At 684 to 691 the chain is on the cytoplasmic side; the sequence is GVPKSERT. A helical membrane pass occupies residues 692 to 712; sequence TVHKNLTFSLASAEGFLMTSE. The Extracellular segment spans residues 713–720; the sequence is WAKANEVA. A helical transmembrane segment spans residues 721–741; that stretch reads CVAVTVAMHFLFLVAFSWMLV. Residues 742–762 are Cytoplasmic-facing; sequence EGLLLWRKVVAVSMHPGPGMR. Residues 763-783 traverse the membrane as a helical segment; sequence LYHATGWGVPVGIVAVTLAML. At 784 to 800 the chain is on the extracellular side; sequence PHDYVAPGHCWLNVHTN. Residues 801–821 form a helical membrane-spanning segment; sequence AIWAFVGPVLFVLTANTCILA. Residues 822–857 are Cytoplasmic-facing; that stretch reads RVVMITVSSARRRARMLSPQPCLQQQIWTQIWATVK. A helical membrane pass occupies residues 858-878; it reads PVLVLLPVLGLTWLAGILVHL. Over 879-880 the chain is Extracellular; that stretch reads SP. A helical transmembrane segment spans residues 881-901; it reads AWAYAAVGLNSIQGLYIFLVY. Residues 902 to 963 lie on the Cytoplasmic side of the membrane; the sequence is AACNEEVRSA…TPRHPLKAPA (62 aa).

This sequence belongs to the G-protein coupled receptor 2 family. Adhesion G-protein coupled receptor (ADGR) subfamily.

It localises to the membrane. Orphan receptor. The chain is Adhesion G protein-coupled receptor D2 (ADGRD2) from Homo sapiens (Human).